The sequence spans 217 residues: Probable cutinase 3 (217 aa).

Positions 1–17 (MSLRSLFVAGLATLALA) are cleaved as a signal peptide. Cystine bridges form between cysteine 39/cysteine 118 and cysteine 65/cysteine 79. Residue serine 129 is the Nucleophile of the active site. The cysteines at positions 180 and 187 are disulfide-linked. The active site involves aspartate 184. The active-site Proton donor/acceptor is histidine 197.

The protein belongs to the cutinase family.

It is found in the secreted. It catalyses the reaction cutin + H2O = cutin monomers.. Functionally, catalyzes the hydrolysis of complex carboxylic polyesters found in the cell wall of plants. Degrades cutin, a macromolecule that forms the structure of the plant cuticle. The protein is Probable cutinase 3 of Aspergillus fumigatus (strain CBS 144.89 / FGSC A1163 / CEA10) (Neosartorya fumigata).